Reading from the N-terminus, the 182-residue chain is PRKR-interacting protein 1 homolog (182 aa).

3 stretches are compositionally biased toward basic and acidic residues: residues 1-18 (MAVENKDARPGKALKKES), 27-43 (PAEEQRLKLERLMRNPD), and 114-124 (IENQKAAEDRT). 2 disordered regions span residues 1-80 (MAVE…GEFH) and 114-182 (IENQ…MGKR). The interval 51–143 (KPKEWNPRAP…LKQKKLMAKK (93 aa)) is required for RNA-binding. Positions 99-157 (LSEKQKLDEEYKEKLIENQKAAEDRTAKRRKKREKLKQKKLMAKKAKMESQKEEDSEKS) form a coiled coil. Residues 125-143 (AKRRKKREKLKQKKLMAKK) show a composition bias toward basic residues. The segment at 126-138 (KRRKKREKLKQKK) is required for nuclear localization. A compositionally biased stretch (basic and acidic residues) spans 144 to 156 (AKMESQKEEDSEK). Residues 164-173 (EGEEKDDDAE) show a composition bias toward acidic residues.

It belongs to the PRKRIP1 family. In terms of assembly, component of the pre-catalytic and post-catalytic spliceosome complexes.

The protein resides in the nucleus. It localises to the nucleolus. In terms of biological role, required for pre-mRNA splicing as component of the spliceosome. Binds double-stranded RNA. The sequence is that of PRKR-interacting protein 1 homolog (prkrip1) from Danio rerio (Zebrafish).